Reading from the N-terminus, the 766-residue chain is Signal transducer and activator of transcription 3.2 (766 aa).

The Essential for nuclear import motif lies at 150–162 (DVRKKVQDLEQKM). Positions 580-670 (WNEGYIIGFI…DATNILVSPL (91 aa)) constitute an SH2 domain. Ser-725 carries the post-translational modification Phosphoserine; by NLK.

The protein belongs to the transcription factor STAT family. Forms a homodimer or a heterodimer with a related family member. Interacts with nlk.2. Phosphorylation of both tyrosine and serine residues, together with dimerization, is required for mesoderm induction.

Its subcellular location is the cytoplasm. It is found in the nucleus. Transcription factor that binds to target promoter sequences and activates transcription upon il6st/gp130 stimulation. Mediates ventralization of embryos, at least in part via inhibition of smad2 signaling. Required for hairy2 to induce dll1/delta1 and promote neural crest cell proliferation and differentiation. Involved in TGFbeta-mediated mesoderm induction in early embryos, acting downstream of map3k7/tak1 and nlk.2. The chain is Signal transducer and activator of transcription 3.2 (stat3.2) from Xenopus laevis (African clawed frog).